The primary structure comprises 456 residues: Chordin-like protein 1 (456 aa).

Positions 1-27 (MRKKWKMGGMKYIFSLLFFLLLEGGKT) are cleaved as a signal peptide. VWFC domains are found at residues 35 to 100 (TYCM…PRCP) and 113 to 179 (KSCE…RVCR). Asn-118 carries N-linked (GlcNAc...) asparagine glycosylation. Residues 179-181 (RGD) carry the Cell attachment site motif. The tract at residues 202–223 (ARHSYHRSHYDPPPSRQAGGLS) is disordered. Positions 258-323 (QVCVSNGKTY…IDGKCCKVCP (66 aa)) constitute a VWFC 3 domain. Residue Asn-291 is glycosylated (N-linked (GlcNAc...) asparagine).

Expressed in the developing cornea and in the eye anterior segment in addition to the retina. Differentially expressed in the fetal brain. There is high expression in cerebellum and neocortex. Expressed in retinal pericytes.

It is found in the secreted. Its function is as follows. Antagonizes the function of BMP4 by binding to it and preventing its interaction with receptors. Alters the fate commitment of neural stem cells from gliogenesis to neurogenesis. Contributes to neuronal differentiation of neural stem cells in the brain by preventing the adoption of a glial fate. May play a crucial role in dorsoventral axis formation. May play a role in embryonic bone formation. May also play an important role in regulating retinal angiogenesis through modulation of BMP4 actions in endothelial cells. Plays a role during anterior segment eye development. This is Chordin-like protein 1 (CHRDL1) from Homo sapiens (Human).